We begin with the raw amino-acid sequence, 642 residues long: Sodium- and chloride-dependent neutral and basic amino acid transporter B(0+) (642 aa).

Over 1 to 44 the chain is Cytoplasmic; it reads MDKLKCPSFFKCREKEKVSASSENFHVGENDENQDRGNWSKKSD. A run of 3 helical transmembrane segments spans residues 45-65, 72-92, and 110-130; these read YLLS…FPYL, GAFL…LFFL, and ILPL…FVTI. Over 131-234 the chain is Extracellular; it reads YYNVIIAYSL…RSSGMNETGV (104 aa). N-linked (GlcNAc...) asparagine glycans are attached at residues Asn155, Asn163, Asn174, Asn189, Asn197, Asn202, and Asn230. A run of 2 helical transmembrane segments spans residues 235–255 and 261–281; these read IVWY…AALF and SGKV…ILLV. Residue Asn302 is glycosylated (N-linked (GlcNAc...) asparagine). Helical transmembrane passes span 315–335, 348–368, 399–419, 450–477, 480–500, 528–548, and 563–583; these read AATQ…ALSS, IVVC…IFSI, LAQL…LLTL, ITLG…VHLI, FCAG…IIWI, CWFV…LVQF, and VALG…MAII. Residues 584-642 are Cytoplasmic-facing; sequence KIIQAKGNIFQRLISCCRPASNWGPYLEQHRGERYKDMVDPKKEADHEIPTVSGSRKPE. Basic and acidic residues predominate over residues 622–632; the sequence is VDPKKEADHEI. The interval 622–642 is disordered; it reads VDPKKEADHEIPTVSGSRKPE.

The protein belongs to the sodium:neurotransmitter symporter (SNF) (TC 2.A.22) family. SLC6A14 subfamily. As to expression, levels are highest in adult and fetal lung, in trachea and salivary gland. Lower levels detected in mammary gland, stomach and pituitary gland, and very low levels in colon, uterus, prostate and testis.

It is found in the membrane. The protein resides in the apical cell membrane. It carries out the reaction glycine(out) + chloride(out) + 2 Na(+)(out) = glycine(in) + chloride(in) + 2 Na(+)(in). The catalysed reaction is L-leucine(out) + chloride(out) + 2 Na(+)(out) = L-leucine(in) + chloride(in) + 2 Na(+)(in). The enzyme catalyses L-glutamine(out) + chloride(out) + 2 Na(+)(out) = L-glutamine(in) + chloride(in) + 2 Na(+)(in). It catalyses the reaction L-arginine(out) + chloride(out) + 2 Na(+)(out) = L-arginine(in) + chloride(in) + 2 Na(+)(in). It carries out the reaction (R)-carnitine(out) + chloride(out) + 2 Na(+)(out) = (R)-carnitine(in) + chloride(in) + 2 Na(+)(in). The catalysed reaction is O-butanoyl-(R)-carnitine(out) + chloride(out) + 2 Na(+)(out) = O-butanoyl-(R)-carnitine(in) + chloride(in) + 2 Na(+)(in). The enzyme catalyses O-propanoyl-(R)-carnitine(out) + chloride(out) + 2 Na(+)(out) = O-propanoyl-(R)-carnitine(in) + chloride(in) + 2 Na(+)(in). It catalyses the reaction L-isoleucine(out) + chloride(out) + 2 Na(+)(out) = L-isoleucine(in) + chloride(in) + 2 Na(+)(in). It carries out the reaction L-methionine(out) + chloride(out) + 2 Na(+)(out) = L-methionine(in) + chloride(in) + 2 Na(+)(in). The catalysed reaction is L-valine(out) + chloride(out) + 2 Na(+)(out) = L-valine(in) + chloride(in) + 2 Na(+)(in). The enzyme catalyses L-alanine(out) + chloride(out) + 2 Na(+)(out) = L-alanine(in) + chloride(in) + 2 Na(+)(in). It catalyses the reaction L-serine(out) + chloride(out) + 2 Na(+)(out) = L-serine(in) + chloride(in) + 2 Na(+)(in). It carries out the reaction L-cysteine(out) + chloride(out) + 2 Na(+)(out) = L-cysteine(in) + chloride(in) + 2 Na(+)(in). The catalysed reaction is L-asparagine(out) + chloride(out) + 2 Na(+)(out) = L-asparagine(in) + chloride(in) + 2 Na(+)(in). The enzyme catalyses L-threonine(out) + chloride(out) + 2 Na(+)(out) = L-threonine(in) + chloride(in) + 2 Na(+)(in). It catalyses the reaction L-phenylalanine(out) + chloride(out) + 2 Na(+)(out) = L-phenylalanine(in) + chloride(in) + 2 Na(+)(in). It carries out the reaction L-tryptophan(out) + chloride(out) + 2 Na(+)(out) = L-tryptophan(in) + chloride(in) + 2 Na(+)(in). The catalysed reaction is L-tyrosine(out) + chloride(out) + 2 Na(+)(out) = L-tyrosine(in) + chloride(in) + 2 Na(+)(in). The enzyme catalyses L-histidine(out) + chloride(out) + 2 Na(+)(out) = L-histidine(in) + chloride(in) + 2 Na(+)(in). It catalyses the reaction L-lysine(out) + chloride(out) + 2 Na(+)(out) = L-lysine(in) + chloride(in) + 2 Na(+)(in). It carries out the reaction beta-alanine(out) + chloride(out) + 2 Na(+)(out) = beta-alanine(in) + chloride(in) + 2 Na(+)(in). Amino acid transporter that plays an important role in the absorption of amino acids in the intestinal tract. Mediates the uptake of a broad range of neutral and cationic amino acids (with the exception of proline) in a Na(+)/Cl(-)-dependent manner. Transports non-alpha-amino acids such as beta-alanine with low affinity, and has a higher affinity for dipolar and cationic amino acids such as leucine and lysine. Can also transport carnitine, butirylcarnitine and propionylcarnitine coupled to the transmembrane gradients of Na(+) and Cl(-). The polypeptide is Sodium- and chloride-dependent neutral and basic amino acid transporter B(0+) (Homo sapiens (Human)).